Here is a 656-residue protein sequence, read N- to C-terminus: CoB--CoM heterodisulfide reductase iron-sulfur subunit A 2 (656 aa).

152 to 175 (GGGVSGIQAALDLADMGFEVILVE) is a binding site for FAD. 4Fe-4S ferredoxin-type domains follow at residues 238-269 (KKPR…FDEG), 286-315 (SVFT…FDQE), 577-606 (IVSE…LVEK), and 610-639 (LVAE…QNHF). 16 residues coordinate [4Fe-4S] cluster: cysteine 248, cysteine 251, cysteine 254, cysteine 258, cysteine 295, cysteine 298, cysteine 301, cysteine 305, cysteine 586, cysteine 589, cysteine 592, cysteine 596, cysteine 619, cysteine 622, cysteine 625, and cysteine 629.

It belongs to the HdrA family. As to quaternary structure, the ferredoxin:CoB-CoM heterodisulfide reductase is composed of three subunits; HdrA, HdrB and HdrC. Requires [4Fe-4S] cluster as cofactor. FAD is required as a cofactor.

The protein operates within cofactor metabolism; coenzyme M-coenzyme B heterodisulfide reduction; coenzyme B and coenzyme M from coenzyme M-coenzyme B heterodisulfide: step 1/1. Its function is as follows. Part of a complex that catalyzes the reversible reduction of CoM-S-S-CoB to the thiol-coenzymes H-S-CoM (coenzyme M) and H-S-CoB (coenzyme B). The chain is CoB--CoM heterodisulfide reductase iron-sulfur subunit A 2 (hdrA2) from Methanopyrus kandleri (strain AV19 / DSM 6324 / JCM 9639 / NBRC 100938).